The chain runs to 427 residues: Zinc finger protein 2 (427 aa).

The 72-residue stretch at 14–85 (VTFEDVAVTF…GFHGSEEKTW (72 aa)) folds into the KRAB domain. Positions 111–142 (HRKQSSLCPKREIQTLTGGPEPEKESPKARTC) are disordered. 8 consecutive C2H2-type zinc fingers follow at residues 169–191 (QECS…QRTH), 197–219 (YDCP…LMFH), 225–247 (YECD…QRIH), 253–275 (FKCN…QRIH), 281–303 (YECQ…LLTH), 309–331 (YECR…QKVH), 337–359 (YQCS…QKIH), and 365–387 (YECG…QRVH). The segment at 393-415 (FECSVCGKEFSSKSSIIQHQRRY) adopts a C2H2-type 9; degenerate zinc-finger fold.

The protein belongs to the krueppel C2H2-type zinc-finger protein family.

Its subcellular location is the nucleus. May be involved in transcriptional regulation. This chain is Zinc finger protein 2, found in Mus musculus (Mouse).